The chain runs to 236 residues: tRNA (guanine-N(1)-)-methyltransferase (236 aa).

Residues G110 and 129–134 contribute to the S-adenosyl-L-methionine site; that span reads LGDFVL.

The protein belongs to the RNA methyltransferase TrmD family. Homodimer.

The protein localises to the cytoplasm. It carries out the reaction guanosine(37) in tRNA + S-adenosyl-L-methionine = N(1)-methylguanosine(37) in tRNA + S-adenosyl-L-homocysteine + H(+). Functionally, specifically methylates guanosine-37 in various tRNAs. The chain is tRNA (guanine-N(1)-)-methyltransferase from Clostridium perfringens (strain SM101 / Type A).